We begin with the raw amino-acid sequence, 210 residues long: Thymidylate kinase (210 aa).

11–18 is a binding site for ATP; that stretch reads GLEGAGKS.

It belongs to the thymidylate kinase family.

It carries out the reaction dTMP + ATP = dTDP + ADP. Its function is as follows. Phosphorylation of dTMP to form dTDP in both de novo and salvage pathways of dTTP synthesis. The chain is Thymidylate kinase from Histophilus somni (strain 2336) (Haemophilus somnus).